Reading from the N-terminus, the 160-residue chain is Thioredoxin-like protein 4A homolog (160 aa).

Residues 132-160 (KFLKKKKKKKNKKKQKKKIKKIKKKIKNN) form a disordered region. The segment covering 133–160 (FLKKKKKKKNKKKQKKKIKKIKKKIKNN) has biased composition (basic residues).

It belongs to the DIM1 family. Component of the precatalytic spliceosome (spliceosome B complex). Component of the U5 snRNP complex. Component of the U4/U6-U5 tri-snRNP complex.

The protein localises to the nucleus. Plays a role in pre-mRNA splicing as component of the U5 snRNP and U4/U6-U5 tri-snRNP complexes that are involved in spliceosome assembly, and as component of the precatalytic spliceosome (spliceosome B complex). The chain is Thioredoxin-like protein 4A homolog (txnl4a) from Dictyostelium discoideum (Social amoeba).